The sequence spans 195 residues: CASP-like protein 1B2 (195 aa).

The Cytoplasmic segment spans residues Met-1–Leu-25. The chain crosses the membrane as a helical span at residues Ile-26–Ile-46. At Met-47 to Pro-78 the chain is on the extracellular side. The helical transmembrane segment at Ala-79 to Val-99 threads the bilayer. Over Thr-100–His-114 the chain is Cytoplasmic. Residues Leu-115–Ala-135 form a helical membrane-spanning segment. Topologically, residues Gln-136–His-160 are extracellular. The helical transmembrane segment at Gly-161–Leu-181 threads the bilayer. The Cytoplasmic portion of the chain corresponds to Ser-182–Gln-195.

Belongs to the Casparian strip membrane proteins (CASP) family. As to quaternary structure, homodimer and heterodimers.

Its subcellular location is the cell membrane. The chain is CASP-like protein 1B2 from Oryza sativa subsp. indica (Rice).